The following is a 139-amino-acid chain: Large ribosomal subunit protein bL17 (139 aa).

A disordered region spans residues 117-139 (DRDPEAKGQDSGPVEIKDESEEG).

It belongs to the bacterial ribosomal protein bL17 family. In terms of assembly, part of the 50S ribosomal subunit. Contacts protein L32.

The protein is Large ribosomal subunit protein bL17 of Rhodospirillum centenum (strain ATCC 51521 / SW).